The following is a 134-amino-acid chain: Profilin-2 (134 aa).

Residues Cys-13 and Cys-118 are joined by a disulfide bond. The Involved in PIP2 interaction signature appears at Ala-84–Thr-100. Residue Thr-114 is modified to Phosphothreonine.

The protein belongs to the profilin family. Occurs in many kinds of cells as a complex with monomeric actin in a 1:1 ratio. Post-translationally, phosphorylated by MAP kinases.

The protein localises to the cytoplasm. It is found in the cytoskeleton. Functionally, binds to actin and affects the structure of the cytoskeleton. At high concentrations, profilin prevents the polymerization of actin, whereas it enhances it at low concentrations. The protein is Profilin-2 of Olea europaea (Common olive).